A 116-amino-acid chain; its full sequence is Proline-rich protein 9 (116 aa).

The polypeptide is Proline-rich protein 9 (PRR9) (Homo sapiens (Human)).